The primary structure comprises 384 residues: Deoxyguanosinetriphosphate triphosphohydrolase-like protein (384 aa).

Positions 63 to 199 (RLTHSLEVAT…ASLADDISYI (137 aa)) constitute an HD domain.

Belongs to the dGTPase family. Type 2 subfamily.

The chain is Deoxyguanosinetriphosphate triphosphohydrolase-like protein from Rickettsia typhi (strain ATCC VR-144 / Wilmington).